We begin with the raw amino-acid sequence, 630 residues long: Very-long-chain aldehyde decarbonylase GL1-7 (630 aa).

The next 4 helical transmembrane spans lie at 93-113 (LYLD…YAII), 126-146 (GALI…YWFH), 185-205 (FLLF…SVLA), and 325-345 (VWYM…AWIY). Residues 133–272 (LHMGPVEFLY…MPFYDYIYNT (140 aa)) form the Fatty acid hydroxylase domain.

The protein belongs to the sterol desaturase family. Homodimer. In terms of tissue distribution, expressed in panicles at low levels.

The protein localises to the endoplasmic reticulum membrane. The catalysed reaction is a long-chain fatty aldehyde + 2 NADPH + O2 + H(+) = a long-chain alkane + formate + 2 NADP(+) + H2O. Aldehyde decarbonylase involved in the conversion of aldehydes to alkanes. Core component of a very-long-chain alkane synthesis complex. The protein is Very-long-chain aldehyde decarbonylase GL1-7 of Oryza sativa subsp. japonica (Rice).